The sequence spans 314 residues: BURP domain-containing protein 8 (314 aa).

A signal peptide spans 1-16; it reads MDLVRLTSLLPPSVMG. Residues 98-314 enclose the BURP domain; the sequence is FFLEKDLFPG…PLGDMLWVRN (217 aa).

Expressed in shoot and panicles.

The polypeptide is BURP domain-containing protein 8 (BURP8) (Oryza sativa subsp. japonica (Rice)).